The primary structure comprises 330 residues: Aspartate--ammonia ligase (330 aa).

The protein belongs to the class-II aminoacyl-tRNA synthetase family. AsnA subfamily.

It is found in the cytoplasm. The catalysed reaction is L-aspartate + NH4(+) + ATP = L-asparagine + AMP + diphosphate + H(+). The protein operates within amino-acid biosynthesis; L-asparagine biosynthesis; L-asparagine from L-aspartate (ammonia route): step 1/1. This is Aspartate--ammonia ligase from Streptococcus pyogenes serotype M49 (strain NZ131).